We begin with the raw amino-acid sequence, 396 residues long: MIISAASDYRAAAQRILPPFLFHYIDGGAYAEYTLRRNVEDLSEVALRQRVLKNMSDLSLETTLFNEKLSMPVALAPVGLCGMYARRGEVQAAAAADAKGIPFTLSTVSVCPIEEVAPTIKRPMWFQLYVLRDRGFMRNALERAKAAGCSTLVFTVDMPTPGARYRDAHSGMSGPNAALRRYWQAATHPQWAWDVGLNGRPHDLGNISAYLGKPTGLEDYIGWLANNFDPSISWKDLEWIREFWDGPMVIKGILDPEDARDAVRFGADGIVVSNHGGRQLDGVLSSARALPAIADAVKGDIAILADSGIRNGLDVVRMIALGADSVLLGRAYLYALATAGQAGVANLLDLIEKEMKVAMTLTGAKSISEISRDSLVQELGKSLPAALAPLTQGDAA.

An FMN hydroxy acid dehydrogenase domain is found at 1–380; that stretch reads MIISAASDYR…SRDSLVQELG (380 aa). Y24 provides a ligand contact to substrate. Residues S106 and Q127 each coordinate FMN. Substrate is bound at residue Y129. T155 lines the FMN pocket. R164 contacts substrate. An FMN-binding site is contributed by K251. The active-site Proton acceptor is the H275. R278 serves as a coordination point for substrate. An FMN-binding site is contributed by 306–330; it reads DSGIRNGLDVVRMIALGADSVLLGR.

Belongs to the FMN-dependent alpha-hydroxy acid dehydrogenase family. Requires FMN as cofactor.

It is found in the cell inner membrane. The catalysed reaction is (S)-lactate + A = pyruvate + AH2. In terms of biological role, catalyzes the conversion of L-lactate to pyruvate. Is coupled to the respiratory chain. The chain is L-lactate dehydrogenase from Citrobacter koseri (strain ATCC BAA-895 / CDC 4225-83 / SGSC4696).